We begin with the raw amino-acid sequence, 145 residues long: MWSYEGKCGFLLLSVYKEQVLDSYSPLTKENGISSNPRYIKRKFPFDSGFPFTRKLPAKVESFLCLPLFLSFLVANLILWLSFHSARVGHQKLSYHLLEWKAFPSSFRNKESKATCDLSSWSNPYFKRKAQIPFSFSRYLLKYLF.

Residues 63–83 (FLCLPLFLSFLVANLILWLSF) traverse the membrane as a helical segment.

It is found in the mitochondrion membrane. This is an uncharacterized protein from Arabidopsis thaliana (Mouse-ear cress).